We begin with the raw amino-acid sequence, 385 residues long: Putative type I restriction enzyme specificity subunit S.HindORF215P (385 aa).

This sequence belongs to the type-I restriction system S methylase family.

Functionally, a putative specificity subunit for a type I restriction enzyme; the corresponding endonuclease and methylase subunits have multiple frameshifts and are probably not expressed. This is Putative type I restriction enzyme specificity subunit S.HindORF215P from Haemophilus influenzae (strain ATCC 51907 / DSM 11121 / KW20 / Rd).